A 227-amino-acid polypeptide reads, in one-letter code: UPF0173 metal-dependent hydrolase Bcer98_3294 (227 aa).

It belongs to the UPF0173 family.

This Bacillus cytotoxicus (strain DSM 22905 / CIP 110041 / 391-98 / NVH 391-98) protein is UPF0173 metal-dependent hydrolase Bcer98_3294.